A 156-amino-acid chain; its full sequence is MSRRHKAEKREINPDPKFGDLVVTKFMNAIMLDGKKSVAENIVYGAFDVVQGKSKQEPLTVFHSALDNIAPHVEVRSRRVGGATYQVPVDVRPERRQALAIRWLIAAARKRNETTMVDRLSGELLDASNNRGSAVKKREDTHKMADANRAFSHYRW.

This sequence belongs to the universal ribosomal protein uS7 family. In terms of assembly, part of the 30S ribosomal subunit. Contacts proteins S9 and S11.

Functionally, one of the primary rRNA binding proteins, it binds directly to 16S rRNA where it nucleates assembly of the head domain of the 30S subunit. Is located at the subunit interface close to the decoding center, probably blocks exit of the E-site tRNA. This is Small ribosomal subunit protein uS7 from Rhizobium leguminosarum bv. trifolii (strain WSM2304).